The sequence spans 430 residues: Probable folylpolyglutamate synthase (430 aa).

37-40 (GKET) is a binding site for ATP. Glutamate 132 contacts Mg(2+). Position 300 (aspartate 300) interacts with ATP.

It belongs to the folylpolyglutamate synthase family.

It is found in the mitochondrion. It carries out the reaction (6S)-5,6,7,8-tetrahydrofolyl-(gamma-L-Glu)(n) + L-glutamate + ATP = (6S)-5,6,7,8-tetrahydrofolyl-(gamma-L-Glu)(n+1) + ADP + phosphate + H(+). Its pathway is cofactor biosynthesis; tetrahydrofolylpolyglutamate biosynthesis. In terms of biological role, conversion of folates to polyglutamate derivatives. This Saccharomyces cerevisiae (strain ATCC 204508 / S288c) (Baker's yeast) protein is Probable folylpolyglutamate synthase (RMA1).